A 528-amino-acid chain; its full sequence is Tyrosine--tRNA ligase, cytoplasmic (528 aa).

M1 is modified (N-acetylmethionine). An N-acetylglycine; in Tyrosine--tRNA ligase, cytoplasmic, N-terminally processed modification is found at G2. Y39 lines the L-tyrosine pocket. Position 39 (Y39) interacts with trans-resveratrol. Positions 44–52 match the 'HIGH' region motif; that stretch reads TTGKPHVAY. L-tyrosine is bound by residues Y166, Q170, D173, and Q188. Trans-resveratrol is bound by residues Q170 and D173. Residue K197 is modified to N6-acetyllysine. Residue S205 is modified to Phosphoserine. K206 is modified (N6-acetyllysine). The 'KMSKS' region signature appears at 222–226; it reads KMSSS. A Nuclear localization signal motif is present at residues 242-247; the sequence is KKKLKK. The segment at 339–363 is disordered; sequence AAYPDPSKQKPPAKGPAKNSEPEEV. In terms of domain architecture, tRNA-binding spans 364-468; sequence IPSRLDIRVG…AGSAPGERVF (105 aa). S386 carries the phosphoserine modification. K474, K482, and K490 each carry N6-acetyllysine.

The protein belongs to the class-I aminoacyl-tRNA synthetase family. Homodimer. Interacts (when binding to resveratrol) with PARP1; interaction stimulates the poly-ADP-ribosyltransferase activity of PARP1.

It is found in the cytoplasm. The protein resides in the nucleus. It catalyses the reaction tRNA(Tyr) + L-tyrosine + ATP = L-tyrosyl-tRNA(Tyr) + AMP + diphosphate + H(+). Resveratrol strongly inhibits the tyrosine--tRNA ligase activity. Tyrosine--tRNA ligase that catalyzes the attachment of tyrosine to tRNA(Tyr) in a two-step reaction: tyrosine is first activated by ATP to form Tyr-AMP and then transferred to the acceptor end of tRNA(Tyr). Also acts as a positive regulator of poly-ADP-ribosylation in the nucleus, independently of its tyrosine--tRNA ligase activity. Activity is switched upon resveratrol-binding: resveratrol strongly inhibits the tyrosine--tRNA ligase activity and promotes relocalization to the nucleus, where YARS1 specifically stimulates the poly-ADP-ribosyltransferase activity of PARP1. The polypeptide is Tyrosine--tRNA ligase, cytoplasmic (Yars1) (Mus musculus (Mouse)).